Reading from the N-terminus, the 347-residue chain is Protein-glutamate methylesterase/protein-glutamine glutaminase 3 (347 aa).

Residues 3-120 (QVFIVDDSAV…KNFLEESEIL (118 aa)) form the Response regulatory domain. Asp54 carries the 4-aspartylphosphate modification. Positions 159–347 (IDTTDKLIAI…SKIVGEVQYF (189 aa)) constitute a CheB-type methylesterase domain. Catalysis depends on residues Ser171, His197, and Asp293.

This sequence belongs to the CheB family. Phosphorylated by CheA. Phosphorylation of the N-terminal regulatory domain activates the methylesterase activity.

It is found in the cytoplasm. It catalyses the reaction [protein]-L-glutamate 5-O-methyl ester + H2O = L-glutamyl-[protein] + methanol + H(+). The enzyme catalyses L-glutaminyl-[protein] + H2O = L-glutamyl-[protein] + NH4(+). In terms of biological role, involved in chemotaxis. Part of a chemotaxis signal transduction system that modulates chemotaxis in response to various stimuli. Catalyzes the demethylation of specific methylglutamate residues introduced into the chemoreceptors (methyl-accepting chemotaxis proteins or MCP) by CheR. Also mediates the irreversible deamidation of specific glutamine residues to glutamic acid. In Leptospira interrogans serogroup Icterohaemorrhagiae serovar copenhageni (strain Fiocruz L1-130), this protein is Protein-glutamate methylesterase/protein-glutamine glutaminase 3.